Reading from the N-terminus, the 438-residue chain is Probable phosphoglucosamine mutase (438 aa).

Ser91 functions as the Phosphoserine intermediate in the catalytic mechanism. Residues Ser91, Asp228, Asp230, and Asp232 each contribute to the Mg(2+) site. Ser91 bears the Phosphoserine mark.

This sequence belongs to the phosphohexose mutase family. It depends on Mg(2+) as a cofactor. In terms of processing, activated by phosphorylation.

The enzyme catalyses alpha-D-glucosamine 1-phosphate = D-glucosamine 6-phosphate. Its function is as follows. Catalyzes the conversion of glucosamine-6-phosphate to glucosamine-1-phosphate. The chain is Probable phosphoglucosamine mutase from Methanocella arvoryzae (strain DSM 22066 / NBRC 105507 / MRE50).